We begin with the raw amino-acid sequence, 230 residues long: Large ribosomal subunit protein uL1 (230 aa).

The protein belongs to the universal ribosomal protein uL1 family. Part of the 50S ribosomal subunit.

Binds directly to 23S rRNA. The L1 stalk is quite mobile in the ribosome, and is involved in E site tRNA release. Its function is as follows. Protein L1 is also a translational repressor protein, it controls the translation of the L11 operon by binding to its mRNA. In Bacillus anthracis (strain A0248), this protein is Large ribosomal subunit protein uL1.